The following is a 349-amino-acid chain: Phosphate acetyltransferase (349 aa).

The protein belongs to the phosphate acetyltransferase and butyryltransferase family.

It is found in the cytoplasm. It catalyses the reaction acetyl-CoA + phosphate = acetyl phosphate + CoA. The protein operates within metabolic intermediate biosynthesis; acetyl-CoA biosynthesis; acetyl-CoA from acetate: step 2/2. In Rickettsia typhi (strain ATCC VR-144 / Wilmington), this protein is Phosphate acetyltransferase (pta).